The chain runs to 119 residues: Large ribosomal subunit protein bL20 (119 aa).

Belongs to the bacterial ribosomal protein bL20 family.

Binds directly to 23S ribosomal RNA and is necessary for the in vitro assembly process of the 50S ribosomal subunit. It is not involved in the protein synthesizing functions of that subunit. In Granulibacter bethesdensis (strain ATCC BAA-1260 / CGDNIH1), this protein is Large ribosomal subunit protein bL20.